Reading from the N-terminus, the 419-residue chain is Thymidine phosphorylase (419 aa).

The protein belongs to the thymidine/pyrimidine-nucleoside phosphorylase family. As to quaternary structure, homodimer.

It carries out the reaction thymidine + phosphate = 2-deoxy-alpha-D-ribose 1-phosphate + thymine. Functionally, the enzymes which catalyze the reversible phosphorolysis of pyrimidine nucleosides are involved in the degradation of these compounds and in their utilization as carbon and energy sources, or in the rescue of pyrimidine bases for nucleotide synthesis. This Mycoplasmoides pirum (Mycoplasma pirum) protein is Thymidine phosphorylase (deoA).